Reading from the N-terminus, the 448-residue chain is MSFTPGKQSSSRASSGNRSGNGILKWADQSDQSRNVQTRGRRAQPKQTATSQQPSGGNVVPYYSWFSGITQFQKGKEFEFAEGQGVPIAPGVPATEAKGYWYRHNRRSFKTADGNQRQLLPRWYFYYLGTGPHAKDQYGTDIDGVFWVASNQADVNTPADILDRDPSSDEAIPTRFPPGTVLPQGYYIEGSGRSAPNSRSTSRASSRASSAGSRSRADSGNRTPTSGVTPDMADQIASLVLAKLGKDATKPQQVTKQTAKEIRQKILNKPRQKRSPNKQCTVQQCFGKRGPNQNFGGGEMLKLGTSDPQFPILAELAPTAGAFFFGSRLELAKVQNLSGNLDEPQKDVYELRYNGAIRFDSTLSGFETIMKVLNENLNAYQQQDGMMNMSPKPQRQRGQKNGQGENDNISVAAPKSRVQQNKSRELTAEDISLLKKMDEPYTEDTSEI.

Residues 1-55 form a disordered region; it reads MSFTPGKQSSSRASSGNRSGNGILKWADQSDQSRNVQTRGRRAQPKQTATSQQPS. Positions 9–22 are enriched in low complexity; that stretch reads SSSRASSGNRSGNG. Polar residues-rich tracts occupy residues 29–38 and 45–55; these read QSDQSRNVQT and PKQTATSQQPS. An RNA-binding region spans residues 52–194; the sequence is QQPSGGNVVP…GYYIEGSGRS (143 aa). Positions 61 to 190 constitute a CoV N NTD domain; it reads PYYSWFSGIT…VLPQGYYIEG (130 aa). Residues arginine 106, arginine 122, and arginine 164 each contribute to the RNA site. Disordered stretches follow at residues 157–231, 266–298, and 385–448; these read TPAD…VTPD, ILNK…FGGG, and GMMN…TSEI. A Phosphoserine; by host modification is found at serine 167. Threonine 174 is modified (phosphothreonine; by host). Serine 191 is modified (phosphoserine; by host). Over residues 193-214 the composition is skewed to low complexity; it reads RSAPNSRSTSRASSRASSAGSR. One can recognise a CoV N CTD domain in the interval 259–384; the sequence is AKEIRQKILN…ENLNAYQQQD (126 aa). The segment covering 266-276 has biased composition (basic residues); that stretch reads ILNKPRQKRSP. Positions 266-384 are dimerization; the sequence is ILNKPRQKRS…ENLNAYQQQD (119 aa). Serine 390 is subject to Phosphoserine; by host. Over residues 399-409 the composition is skewed to polar residues; that stretch reads QKNGQGENDNI. A compositionally biased stretch (basic and acidic residues) spans 422–439; that stretch reads KSRELTAEDISLLKKMDE. The residue at position 423 (serine 423) is a Phosphoserine; by host. Phosphothreonine; by host is present on threonine 427.

It belongs to the betacoronavirus nucleocapsid protein family. As to quaternary structure, homooligomer. Both monomeric and oligomeric forms interact with RNA. Interacts with protein M. Interacts with NSP3; this interaction serves to tether the genome to the newly translated replicase-transcriptase complex at a very early stage of infection. ADP-ribosylated. The ADP-ribosylation is retained in the virion during infection. In terms of processing, phosphorylated on serine and threonine residues.

It is found in the virion. Its subcellular location is the host endoplasmic reticulum-Golgi intermediate compartment. The protein resides in the host Golgi apparatus. Its function is as follows. Packages the positive strand viral genome RNA into a helical ribonucleocapsid (RNP) and plays a fundamental role during virion assembly through its interactions with the viral genome and membrane protein M. Plays an important role in enhancing the efficiency of subgenomic viral RNA transcription as well as viral replication. This Bovine coronavirus (strain LY-138) (BCoV) protein is Nucleoprotein.